The sequence spans 527 residues: Bacillolysin (527 aa).

Positions Met-1–Ala-28 are cleaved as a signal peptide. Residues Lys-29–His-223 constitute a propeptide, activation peptide. 3 residues coordinate Ca(2+): Asp-276, Asp-278, and Asp-354. A Zn(2+)-binding site is contributed by His-358. Residue Glu-359 is part of the active site. The Zn(2+) site is built by His-362 and Glu-382. Ca(2+)-binding residues include Asp-393, Asn-394, Asp-396, Glu-401, Tyr-404, Thr-405, and Asp-411. His-442 serves as the catalytic Proton donor.

Belongs to the peptidase M4 family. Ca(2+) serves as cofactor. It depends on Zn(2+) as a cofactor.

The protein localises to the secreted. The catalysed reaction is Similar, but not identical, to that of thermolysin.. In terms of biological role, extracellular zinc metalloprotease. This chain is Bacillolysin (npr), found in Brevibacillus brevis (Bacillus brevis).